The following is a 514-amino-acid chain: Monocarboxylate transporter 10 (514 aa).

The segment at M1–P64 is disordered. The Cytoplasmic segment spans residues M1–E65. A helical transmembrane segment spans residues G66–I86. Residues Q87–A113 lie on the Extracellular side of the membrane. Residues A114 to F134 form a helical membrane-spanning segment. Over T135–T143 the chain is Cytoplasmic. The helical transmembrane segment at A144 to I164 threads the bilayer. At E165 to T170 the chain is on the extracellular side. A helical membrane pass occupies residues Y171–G191. At H192–G199 the chain is on the cytoplasmic side. The helical transmembrane segment at L200–L220 threads the bilayer. The Extracellular segment spans residues G221–V227. Residues G228–F248 traverse the membrane as a helical segment. At T249 to T290 the chain is on the cytoplasmic side. S262 is subject to Phosphoserine. Residues A291–V311 form a helical membrane-spanning segment. The Extracellular segment spans residues H312–E328. Residues V329 to A349 form a helical membrane-spanning segment. Position 350 (D350) is a topological domain, cytoplasmic. Residues Y351–T371 form a helical membrane-spanning segment. The Extracellular segment spans residues S372 to D395. Residues G396 to S416 traverse the membrane as a helical segment. The Cytoplasmic portion of the chain corresponds to Q417–A418. Residues I419 to L439 traverse the membrane as a helical segment. Residues L440–A450 are Extracellular-facing. Residues F451–I471 form a helical membrane-spanning segment. Residues H472–I514 lie on the Cytoplasmic side of the membrane. Phosphoserine is present on residues S497, S500, S502, and S503.

Belongs to the major facilitator superfamily. Monocarboxylate porter (TC 2.A.1.13) family. In terms of processing, not N-glycosylated. As to expression, strongly expressed in intestine, placenta and liver. In small intestine is detected in the basolateral membrane (at protein level).

The protein resides in the cell membrane. It is found in the basolateral cell membrane. The catalysed reaction is L-tryptophan(in) = L-tryptophan(out). The enzyme catalyses L-tyrosine(in) = L-tyrosine(out). It catalyses the reaction L-phenylalanine(in) = L-phenylalanine(out). It carries out the reaction 3,3',5-triiodo-L-thyronine(out) = 3,3',5-triiodo-L-thyronine(in). The catalysed reaction is L-thyroxine(out) = L-thyroxine(in). Its function is as follows. Sodium- and proton-independent thyroid hormones and aromatic acids transporter. Mediates both uptake and efflux of 3,5,3'-triiodothyronine (T3) and 3,5,3',5'-tetraiodothyronine (T4) with high affinity, suggesting a role in the homeostasis of thyroid hormone levels. Responsible for low affinity bidirectional transport of the aromatic amino acids, such as phenylalanine, tyrosine, tryptophan and L-3,4-dihydroxyphenylalanine (L-dopa). Plays an important role in homeostasis of aromatic amino acids. This is Monocarboxylate transporter 10 (Slc16a10) from Rattus norvegicus (Rat).